A 336-amino-acid polypeptide reads, in one-letter code: GTPase Obg (336 aa).

In terms of domain architecture, Obg spans 1-159 (MKFIDEATII…RRLQLELILL (159 aa)). Residues 160–333 (ADVGLLGLPN…LCRDIMLFIN (174 aa)) form the OBG-type G domain. GTP is bound by residues 166-173 (GLPNVGKS), 191-195 (FTTLV), 213-216 (DIPG), 283-286 (NKLD), and 314-316 (SAM). 2 residues coordinate Mg(2+): S173 and T193.

Belongs to the TRAFAC class OBG-HflX-like GTPase superfamily. OBG GTPase family. Monomer. Requires Mg(2+) as cofactor.

Its subcellular location is the cytoplasm. Its function is as follows. An essential GTPase which binds GTP, GDP and possibly (p)ppGpp with moderate affinity, with high nucleotide exchange rates and a fairly low GTP hydrolysis rate. Plays a role in control of the cell cycle, stress response, ribosome biogenesis and in those bacteria that undergo differentiation, in morphogenesis control. This chain is GTPase Obg, found in Baumannia cicadellinicola subsp. Homalodisca coagulata.